The primary structure comprises 323 residues: Probable cell division protein WhiA (323 aa).

The H-T-H motif DNA-binding region spans 275-309 (TLKELGEMLTTGQVSKSGINHRLRKLDQIAERLRS).

This sequence belongs to the WhiA family.

Functionally, involved in cell division and chromosome segregation. In Listeria innocua serovar 6a (strain ATCC BAA-680 / CLIP 11262), this protein is Probable cell division protein WhiA.